A 273-amino-acid chain; its full sequence is MKKYLLGIGLILALIACKQNVSSLDEKNSVSVDLPGEMKVLVSKEKDKDGKYSLMATVDKLELKGTSDKNNGSGVLEGVKADKSKVKLTVSDDLSTTTLEVLKEDGKTLVSKKRTSKDKSSTEEKFNEKGELVEKIMARANGTILEYTGIKSDGSGKAKETLKEYVLEGTLTAEKATLVVKEGTVTLSKHISKSGEVTAELNDTDSTQATKKTGKWDAGTSTLTITVNNKKTKALVFTKQDTITSQKYDSAGTNLEGTAVEIKTLDELKNALR.

The N-terminal stretch at 1-16 (MKKYLLGIGLILALIA) is a signal peptide. Cys-17 carries the N-palmitoyl cysteine lipid modification. Residue Cys-17 is the site of S-diacylglycerol cysteine attachment.

Belongs to the OspA lipoprotein family.

It is found in the cell outer membrane. It localises to the cell surface. The sequence is that of Outer surface protein A from Borreliella burgdorferi (Lyme disease spirochete).